The following is a 761-amino-acid chain: BMP/retinoic acid-inducible neural-specific protein 1 (761 aa).

The N-terminal stretch at 1–19 is a signal peptide; it reads MNWRFVELLYFLFIWGRIS. Residues 68–251 enclose the MACPF domain; it reads RYKIYREFAR…FVQSALSYIM (184 aa). N-linked (GlcNAc...) asparagine glycans are attached at residues Asn156, Asn433, Asn443, Asn553, Asn599, Asn631, and Asn677.

It belongs to the BRINP family. As to expression, highly expressed in brain. Weakly expressed in heart, lung, skeletal muscle, kidney, thymus, prostate, testis and small intestine.

It is found in the cytoplasm. Functionally, plays a role in neurogenesis and brain development. May suppress cell cycle progression in postmitotic neurons by inhibiting G1/S transition. The protein is BMP/retinoic acid-inducible neural-specific protein 1 (BRINP1) of Homo sapiens (Human).